A 427-amino-acid chain; its full sequence is Glutamate-1-semialdehyde 2,1-aminomutase (427 aa).

Lysine 265 carries the post-translational modification N6-(pyridoxal phosphate)lysine.

This sequence belongs to the class-III pyridoxal-phosphate-dependent aminotransferase family. HemL subfamily. As to quaternary structure, homodimer. Pyridoxal 5'-phosphate is required as a cofactor.

The protein resides in the cytoplasm. The enzyme catalyses (S)-4-amino-5-oxopentanoate = 5-aminolevulinate. Its pathway is porphyrin-containing compound metabolism; protoporphyrin-IX biosynthesis; 5-aminolevulinate from L-glutamyl-tRNA(Glu): step 2/2. In Neisseria meningitidis serogroup C (strain 053442), this protein is Glutamate-1-semialdehyde 2,1-aminomutase.